The following is a 227-amino-acid chain: MEANTLFLLKALCLLCFNVCFTLASDPDPIQDFCIPKPVTSPYHDHHFSTNLPCKNSSEVTTEDFVFSGLKTAGNFTETGFATVPVGPENFPGLNTLGISFVRADLKPGSINPPHYHPRATEVAHLVKGRVYSGFVDSNNKVYAKVMEEGEMMVYPKGLVHFQMNVGDVTATIVGGLNSQNPGIQKIPSVVFGSGINEELLMKAFGLSLKQIGTLKKRFDPVMSNEH.

Positions 1 to 24 (MEANTLFLLKALCLLCFNVCFTLA) are cleaved as a signal peptide. An intrachain disulfide couples cysteine 34 to cysteine 54. 2 N-linked (GlcNAc...) asparagine glycosylation sites follow: asparagine 56 and asparagine 75. Residues 68 to 213 (SGLKTAGNFT…AFGLSLKQIG (146 aa)) enclose the Cupin type-1 domain. Mn(2+) is bound by residues histidine 115, histidine 117, glutamate 122, and histidine 161.

This sequence belongs to the germin family. As to quaternary structure, oligomer (believed to be a pentamer but probably hexamer).

It is found in the secreted. It localises to the extracellular space. The protein resides in the apoplast. May play a role in plant defense. Probably has no oxalate oxidase activity even if the active site is conserved. This chain is Germin-like protein subfamily 3 member 2, found in Arabidopsis thaliana (Mouse-ear cress).